Consider the following 287-residue polypeptide: 33 kDa chaperonin (287 aa).

Cystine bridges form between Cys-231-Cys-233 and Cys-264-Cys-267.

This sequence belongs to the HSP33 family. Under oxidizing conditions two disulfide bonds are formed involving the reactive cysteines. Under reducing conditions zinc is bound to the reactive cysteines and the protein is inactive.

Its subcellular location is the cytoplasm. Functionally, redox regulated molecular chaperone. Protects both thermally unfolding and oxidatively damaged proteins from irreversible aggregation. Plays an important role in the bacterial defense system toward oxidative stress. The protein is 33 kDa chaperonin of Thermosipho melanesiensis (strain DSM 12029 / CIP 104789 / BI429).